The chain runs to 379 residues: Cytochrome b (379 aa).

4 consecutive transmembrane segments (helical) span residues 33 to 53 (FGSLLGLCLITQIVTGLFLAM), 77 to 98 (WFLRNIHANGASLFFICLYLHI), 113 to 133 (WNVGVVLFLLVMMTAFVGYVL), and 178 to 198 (FFTFHFLFPFVIAGASMIHLL). His83 and His97 together coordinate heme b. Positions 182 and 196 each coordinate heme b. His201 is an a ubiquinone binding site. Helical transmembrane passes span 226–246 (YKDLLGFIILLAGLMFLTLFS), 288–308 (LGGVLALLFSILILMIVPITH), 320–340 (LTQILFWTLVADMFILTWIGG), and 347–367 (FIIIGQIASIIYFALFLVFAP).

It belongs to the cytochrome b family. In terms of assembly, the cytochrome bc1 complex contains 3 respiratory subunits (MT-CYB, CYC1 and UQCRFS1), 2 core proteins (UQCRC1 and UQCRC2) and probably 6 low-molecular weight proteins. The cofactor is heme b.

It is found in the mitochondrion inner membrane. In terms of biological role, component of the ubiquinol-cytochrome c reductase complex (complex III or cytochrome b-c1 complex) that is part of the mitochondrial respiratory chain. The b-c1 complex mediates electron transfer from ubiquinol to cytochrome c. Contributes to the generation of a proton gradient across the mitochondrial membrane that is then used for ATP synthesis. This is Cytochrome b (mt-cyb) from Amia calva (Bowfin).